A 335-amino-acid chain; its full sequence is Nucleoid-associated protein YejK (335 aa).

Belongs to the YejK family.

The protein localises to the cytoplasm. It localises to the nucleoid. The chain is Nucleoid-associated protein YejK from Salmonella enteritidis PT4 (strain P125109).